Reading from the N-terminus, the 480-residue chain is Probable tRNA N6-adenosine threonylcarbamoyltransferase, mitochondrial (480 aa).

Residues 1-86 (MVRLFLTLSP…NPNFDDNLVV (86 aa)) constitute a mitochondrion transit peptide. The a divalent metal cation site is built by His194 and His198. Substrate contacts are provided by residues 217–221 (LISGG), Asp250, Gly265, Glu269, 373–374 (SN), and Thr401. Asp402 is an a divalent metal cation binding site.

It belongs to the KAE1 / TsaD family. Homodimer. It depends on a divalent metal cation as a cofactor. In terms of tissue distribution, expressed in young developing leaves, roots, flowers and siliques.

It localises to the mitochondrion inner membrane. It carries out the reaction L-threonylcarbamoyladenylate + adenosine(37) in tRNA = N(6)-L-threonylcarbamoyladenosine(37) in tRNA + AMP + H(+). Its function is as follows. Required for the formation of a threonylcarbamoyl group on adenosine at position 37 (t(6)A37) in mitochondrial tRNAs that read codons beginning with adenine. Probably involved in the transfer of the threonylcarbamoyl moiety of threonylcarbamoyl-AMP (TC-AMP) to the N6 group of A37. Involved in mitochondrial genome maintenance. May have a role in embryonic development in plants. The sequence is that of Probable tRNA N6-adenosine threonylcarbamoyltransferase, mitochondrial from Arabidopsis thaliana (Mouse-ear cress).